We begin with the raw amino-acid sequence, 80 residues long: D-alanyl carrier protein 2 (80 aa).

Positions 1-80 (MIMDDVKATV…KIVAKVASLQ (80 aa)) constitute a Carrier domain. S38 bears the O-(pantetheine 4'-phosphoryl)serine mark.

It belongs to the DltC family. Post-translationally, 4'-phosphopantetheine is transferred from CoA to a specific serine of apo-DCP.

Its subcellular location is the cytoplasm. The protein operates within cell wall biogenesis; lipoteichoic acid biosynthesis. Its function is as follows. Carrier protein involved in the D-alanylation of lipoteichoic acid (LTA). The loading of thioester-linked D-alanine onto DltC is catalyzed by D-alanine--D-alanyl carrier protein ligase DltA. The DltC-carried D-alanyl group is further transferred to cell membrane phosphatidylglycerol (PG) by forming an ester bond, probably catalyzed by DltD. D-alanylation of LTA plays an important role in modulating the properties of the cell wall in Gram-positive bacteria, influencing the net charge of the cell wall. In Lactiplantibacillus plantarum (strain ATCC BAA-793 / NCIMB 8826 / WCFS1) (Lactobacillus plantarum), this protein is D-alanyl carrier protein 2.